Consider the following 373-residue polypeptide: Putative F-box/kelch-repeat protein At2g41360 (373 aa).

Positions 8–54 constitute an F-box domain; it reads WSSLSCLPDEMVLNCLARVPRRYYENISCVSVRLRSLVRTPELYRMR. Kelch repeat units lie at residues 116 to 162 and 163 to 208; these read EIYF…VFDG and KIHV…MVSS.

The protein is Putative F-box/kelch-repeat protein At2g41360 of Arabidopsis thaliana (Mouse-ear cress).